The sequence spans 229 residues: Casparian strip membrane protein 1 (229 aa).

The Cytoplasmic portion of the chain corresponds to 1–67 (MSTSEAGAAA…FRRADRGSRC (67 aa)). A helical transmembrane segment spans residues 68 to 88 (VALLDFVLRVAAFGPALAAAI). Over 89–115 (ATGTSDETLSVFTQFFQFHARFDDFPA) the chain is Extracellular. Residues 116-136 (LLFFMVANAIAAGYLVLSLPF) traverse the membrane as a helical segment. Topologically, residues 137 to 157 (SAVIVLRPQAIGLRHLLLVCD) are cytoplasmic. Residues 158–178 (MIIAALLTAAAAAAAAIVDLA) traverse the membrane as a helical segment. Topologically, residues 179-205 (HSGNLRANWVPICMQFHGFCQRTSGAV) are extracellular. The chain crosses the membrane as a helical span at residues 206–226 (VGSFLAVLVLLFLVILAAFAI). The Cytoplasmic segment spans residues 227-229 (RKR).

It belongs to the Casparian strip membrane proteins (CASP) family. In terms of assembly, homodimer and heterodimers.

The protein resides in the cell membrane. In terms of biological role, regulates membrane-cell wall junctions and localized cell wall deposition. Required for establishment of the Casparian strip membrane domain (CSD) and the subsequent formation of Casparian strips, a cell wall modification of the root endodermis that determines an apoplastic barrier between the intraorganismal apoplasm and the extraorganismal apoplasm and prevents lateral diffusion. This chain is Casparian strip membrane protein 1, found in Sorghum bicolor (Sorghum).